A 238-amino-acid chain; its full sequence is Ribosomal RNA small subunit methyltransferase G (238 aa).

S-adenosyl-L-methionine-binding positions include Gly77, Phe82, 128–129 (AE), and Arg147.

Belongs to the methyltransferase superfamily. RNA methyltransferase RsmG family.

Its subcellular location is the cytoplasm. Specifically methylates the N7 position of guanine in position 535 of 16S rRNA. The polypeptide is Ribosomal RNA small subunit methyltransferase G (Exiguobacterium sp. (strain ATCC BAA-1283 / AT1b)).